Consider the following 94-residue polypeptide: MAHKKGTGSTRNGRDSQSKRLGVKRYGGQVVRAGNILVRQRGTKFHPGNNVGRGSDDTLFALIDGVVKFEYKTRSRQKISVYPVPQEEPATVAG.

The disordered stretch occupies residues 1 to 25 (MAHKKGTGSTRNGRDSQSKRLGVKR).

Belongs to the bacterial ribosomal protein bL27 family.

The protein is Large ribosomal subunit protein bL27 of Gloeothece citriformis (strain PCC 7424) (Cyanothece sp. (strain PCC 7424)).